The following is a 352-amino-acid chain: Nuclear receptor subfamily 1 group I member 3 (352 aa).

Residues 8-83 constitute a DNA-binding region (nuclear receptor); sequence LRNCVVCGDQ…AGMRKDMILS (76 aa). The segment at 11–31 adopts an NR C4-type zinc-finger fold; that stretch reads CVVCGDQATGYHFNALTCEGC. The residue at position 38 (Thr-38) is a Phosphothreonine; by PKC. The NR C4-type zinc finger occupies 47–71; it reads CPFAGSCEVSKTQRRHCPACRLQKC. Positions 109–352 constitute an NR LBD domain; sequence EQEELIRTLL…MMPLLQEICS (244 aa).

This sequence belongs to the nuclear hormone receptor family. NR1 subfamily. As to quaternary structure, interacts with ECT2. Heterodimer of NR1I3 and RXR. Interacts with PSMC4. Directly interacts with DNAJC7. The DNAJC7-NR1I3 complex may also include HSP90. Interacts with CRY1. Interacts with CRY2 in a ligand-dependent manner. In terms of processing, phosphorylated at Thr-38 by PKC, dephosphorylation of Thr-38 is required for nuclear translocation and activation. In terms of tissue distribution, predominantly expressed in liver.

Its subcellular location is the nucleus. It is found in the cytoplasm. The protein localises to the cytoskeleton. In terms of biological role, binds and transactivates the retinoic acid response elements that control expression of the retinoic acid receptor beta 2 and alcohol dehydrogenase 3 genes. Transactivates both the phenobarbital responsive element module of the human CYP2B6 gene and the CYP3A4 xenobiotic response element. In Homo sapiens (Human), this protein is Nuclear receptor subfamily 1 group I member 3 (NR1I3).